The sequence spans 1070 residues: DNA-directed RNA polymerase subunit beta (1070 aa).

It belongs to the RNA polymerase beta chain family. In terms of assembly, in plastids the minimal PEP RNA polymerase catalytic core is composed of four subunits: alpha, beta, beta', and beta''. When a (nuclear-encoded) sigma factor is associated with the core the holoenzyme is formed, which can initiate transcription.

The protein localises to the plastid. It is found in the chloroplast. The enzyme catalyses RNA(n) + a ribonucleoside 5'-triphosphate = RNA(n+1) + diphosphate. In terms of biological role, DNA-dependent RNA polymerase catalyzes the transcription of DNA into RNA using the four ribonucleoside triphosphates as substrates. The sequence is that of DNA-directed RNA polymerase subunit beta from Chaetosphaeridium globosum (Charophycean green alga).